A 249-amino-acid chain; its full sequence is Small ribosomal subunit protein uS2 (249 aa).

This sequence belongs to the universal ribosomal protein uS2 family.

The chain is Small ribosomal subunit protein uS2 from Polynucleobacter necessarius subsp. necessarius (strain STIR1).